A 508-amino-acid chain; its full sequence is Lysine--tRNA ligase (508 aa).

The Mg(2+) site is built by glutamate 418 and glutamate 425.

This sequence belongs to the class-II aminoacyl-tRNA synthetase family. Homodimer. It depends on Mg(2+) as a cofactor.

Its subcellular location is the cytoplasm. It carries out the reaction tRNA(Lys) + L-lysine + ATP = L-lysyl-tRNA(Lys) + AMP + diphosphate. This is Lysine--tRNA ligase from Burkholderia pseudomallei (strain 1710b).